We begin with the raw amino-acid sequence, 704 residues long: Polyribonucleotide nucleotidyltransferase (704 aa).

Positions 486 and 492 each coordinate Mg(2+). The KH domain occupies 553–612; sequence PRIYTMKINPEKIKDVIGKGGSVIRALTDETGTTIEIEDDGTIKIAATDGDKAKHAIRRI. The 69-residue stretch at 622-690 folds into the S1 motif domain; that stretch reads GRIYAGKVTR…RQGRIRLSIK (69 aa).

Belongs to the polyribonucleotide nucleotidyltransferase family. As to quaternary structure, component of the RNA degradosome, which is a multiprotein complex involved in RNA processing and mRNA degradation. Mg(2+) serves as cofactor.

Its subcellular location is the cytoplasm. The catalysed reaction is RNA(n+1) + phosphate = RNA(n) + a ribonucleoside 5'-diphosphate. Functionally, involved in mRNA degradation. Catalyzes the phosphorolysis of single-stranded polyribonucleotides processively in the 3'- to 5'-direction. This chain is Polyribonucleotide nucleotidyltransferase, found in Yersinia pseudotuberculosis serotype IB (strain PB1/+).